A 543-amino-acid chain; its full sequence is Chaperonin GroEL (543 aa).

ATP is bound by residues 29–32, 86–90, glycine 413, 476–478, and aspartate 492; these read TLGP, DGTTT, and NAA.

This sequence belongs to the chaperonin (HSP60) family. Forms a cylinder of 14 subunits composed of two heptameric rings stacked back-to-back. Interacts with the co-chaperonin GroES.

The protein localises to the cytoplasm. It carries out the reaction ATP + H2O + a folded polypeptide = ADP + phosphate + an unfolded polypeptide.. Together with its co-chaperonin GroES, plays an essential role in assisting protein folding. The GroEL-GroES system forms a nano-cage that allows encapsulation of the non-native substrate proteins and provides a physical environment optimized to promote and accelerate protein folding. This is Chaperonin GroEL from Brevibacillus choshinensis.